The chain runs to 439 residues: Adenylosuccinate synthetase (439 aa).

GTP-binding positions include 25–31 (GDEGKGK), 53–55 (GHT), and K62. D26 serves as the catalytic Proton acceptor. Mg(2+) contacts are provided by D26 and G53. IMP is bound by residues 26–29 (DEGK) and 51–54 (NAGH). Residue H54 is the Proton donor of the active site. IMP contacts are provided by T141, R155, N232, and T247. T307 serves as a coordination point for GTP. 307-313 (TTTKRPR) serves as a coordination point for substrate. Residue R311 participates in IMP binding. GTP is bound by residues R313, 339-341 (KLD), and 425-427 (GVG).

Belongs to the adenylosuccinate synthetase family. In terms of assembly, homodimer. Mg(2+) serves as cofactor.

Its subcellular location is the cytoplasm. The catalysed reaction is IMP + L-aspartate + GTP = N(6)-(1,2-dicarboxyethyl)-AMP + GDP + phosphate + 2 H(+). The protein operates within purine metabolism; AMP biosynthesis via de novo pathway; AMP from IMP: step 1/2. Its function is as follows. Plays an important role in the salvage pathway for purine nucleotide biosynthesis. Catalyzes the first commited step in the biosynthesis of AMP from IMP. This is Adenylosuccinate synthetase (ADSS) from Plasmodium berghei (strain Anka).